A 280-amino-acid chain; its full sequence is 4-deoxy-L-threo-5-hexosulose-uronate ketol-isomerase (280 aa).

Residues histidine 198, histidine 200, glutamate 205, and histidine 247 each contribute to the Zn(2+) site.

This sequence belongs to the KduI family. Zn(2+) is required as a cofactor.

It catalyses the reaction 5-dehydro-4-deoxy-D-glucuronate = 3-deoxy-D-glycero-2,5-hexodiulosonate. Its pathway is glycan metabolism; pectin degradation; 2-dehydro-3-deoxy-D-gluconate from pectin: step 4/5. In terms of biological role, catalyzes the isomerization of 5-dehydro-4-deoxy-D-glucuronate to 3-deoxy-D-glycero-2,5-hexodiulosonate. This is 4-deoxy-L-threo-5-hexosulose-uronate ketol-isomerase from Bacteroides fragilis (strain YCH46).